The following is a 351-amino-acid chain: UDP-glucose 4-epimerase 5 (351 aa).

NAD(+)-binding positions include 13 to 15 (GYI), 34 to 38 (DNLDN), 64 to 65 (DL), Phe86, and Lys90. Position 130 to 132 (130 to 132 (SAT)) interacts with substrate. Catalysis depends on Tyr154, which acts as the Proton acceptor. The NAD(+) site is built by Lys158 and Tyr182. Residues 182 to 184 (YFN), 203 to 205 (NNL), 221 to 223 (TVF), Arg236, and 298 to 301 (RPGD) contribute to the substrate site.

This sequence belongs to the NAD(P)-dependent epimerase/dehydratase family. In terms of assembly, forms homodimers and heterodimers. Requires NAD(+) as cofactor. In terms of tissue distribution, widely expressed.

It carries out the reaction UDP-alpha-D-glucose = UDP-alpha-D-galactose. It functions in the pathway carbohydrate metabolism; galactose metabolism. Its activity is regulated as follows. Enhanced activity by NaCl. Inhibited by UDP. Functionally, catalyzes the interconversion between UDP-glucose and UDP-galactose. The protein is UDP-glucose 4-epimerase 5 of Arabidopsis thaliana (Mouse-ear cress).